A 146-amino-acid polypeptide reads, in one-letter code: Transcription antitermination protein NusB (146 aa).

Belongs to the NusB family.

Functionally, involved in transcription antitermination. Required for transcription of ribosomal RNA (rRNA) genes. Binds specifically to the boxA antiterminator sequence of the ribosomal RNA (rrn) operons. The chain is Transcription antitermination protein NusB from Koribacter versatilis (strain Ellin345).